The chain runs to 136 residues: Histone H3-7 (136 aa).

The disordered stretch occupies residues M1–R43. R3 is subject to Asymmetric dimethylarginine. Position 3 is a citrulline; alternate (R3). Residue T4 is modified to Phosphothreonine. K5 carries the post-translational modification Allysine; alternate. An N6,N6,N6-trimethyllysine; alternate modification is found at K5. An N6,N6-dimethyllysine; alternate modification is found at K5. Residue K5 is modified to N6-(2-hydroxyisobutyryl)lysine; alternate. Position 5 is an N6-(beta-hydroxybutyryl)lysine; alternate (K5). An N6-acetyllysine; alternate modification is found at K5. K5 carries the N6-methyllysine; alternate modification. A 5-glutamyl dopamine; alternate modification is found at Q6. Q6 carries the post-translational modification 5-glutamyl serotonin; alternate. T7 carries the phosphothreonine modification. A Citrulline; alternate modification is found at R9. Residue R9 is modified to Symmetric dimethylarginine. K10 bears the N6,N6,N6-trimethyllysine; alternate mark. K10 is modified (N6,N6-dimethyllysine; alternate). K10 carries the N6-(2-hydroxyisobutyryl)lysine; alternate modification. N6-(beta-hydroxybutyryl)lysine; alternate is present on K10. K10 bears the N6-acetyllysine; alternate mark. K10 is subject to N6-methyllysine; alternate. At K10 the chain carries N6-lactoyllysine; alternate. At S11 the chain carries ADP-ribosylserine; alternate. S11 is modified (phosphoserine; alternate). T12 is modified (phosphothreonine). Position 15 is an N6-(2-hydroxyisobutyryl)lysine; alternate (K15). An N6-(beta-hydroxybutyryl)lysine; alternate modification is found at K15. N6-acetyllysine; alternate is present on K15. K15 is modified (N6-lactoyllysine; alternate). K15 carries the N6-glutaryllysine; alternate modification. Position 15 is an N6-succinyllysine; alternate (K15). R18 carries the asymmetric dimethylarginine modification. Citrulline; alternate is present on R18. Residues K19 and K24 each carry the N6-(2-hydroxyisobutyryl)lysine; alternate modification. 2 positions are modified to N6-(beta-hydroxybutyryl)lysine; alternate: K19 and K24. An N6-acetyllysine; alternate mark is found at K19 and K24. An N6-methyllysine; alternate mark is found at K19 and K24. N6-lactoyllysine; alternate occurs at positions 19 and 24. K19 and K24 each carry N6-glutaryllysine; alternate. K19 and K24 each carry N6-butyryllysine; alternate. Citrulline is present on R27. K28 is modified (N6,N6,N6-trimethyllysine; alternate). Position 28 is an N6,N6-dimethyllysine; alternate (K28). The residue at position 28 (K28) is an N6-(2-hydroxyisobutyryl)lysine; alternate. N6-acetyllysine; alternate is present on K28. Residue K28 is modified to N6-methyllysine; alternate. K28 carries the post-translational modification N6-lactoyllysine; alternate. N6-glutaryllysine; alternate is present on K28. The residue at position 29 (S29) is an ADP-ribosylserine; alternate. Phosphoserine; alternate is present on S29. N6,N6,N6-trimethyllysine; alternate is present on K37. K37 is modified (N6,N6-dimethyllysine; alternate). K37 is subject to N6-(2-hydroxyisobutyryl)lysine; alternate. Position 37 is an N6-acetyllysine; alternate (K37). An N6-methyllysine; alternate modification is found at K37. K38 is modified (N6-methyllysine). At Y42 the chain carries Phosphotyrosine. Position 57 is an N6,N6,N6-trimethyllysine; alternate (K57). Residue K57 is modified to N6-(2-hydroxyisobutyryl)lysine; alternate. K57 carries the post-translational modification N6-(beta-hydroxybutyryl)lysine; alternate. At K57 the chain carries N6-acetyllysine; alternate. N6-lactoyllysine; alternate is present on K57. An N6-glutaryllysine; alternate modification is found at K57. Residue K57 is modified to N6-succinyllysine; alternate. K57 is modified (N6-methyllysine). S58 is modified (phosphoserine). N6-(2-hydroxyisobutyryl)lysine; alternate occurs at positions 65 and 80. K65 and K80 each carry N6-methyllysine; alternate. K80 carries the N6,N6,N6-trimethyllysine; alternate modification. K80 carries the N6,N6-dimethyllysine; alternate modification. The residue at position 80 (K80) is an N6-acetyllysine; alternate. N6-lactoyllysine; alternate is present on K80. K80 bears the N6-glutaryllysine; alternate mark. N6-succinyllysine; alternate is present on K80. The residue at position 81 (T81) is a Phosphothreonine. S87 is subject to Phosphoserine. T108 carries the post-translational modification Phosphothreonine. K116 and K123 each carry N6-acetyllysine; alternate. N6-glutaryllysine; alternate is present on residues K116 and K123. K123 is modified (N6-(2-hydroxyisobutyryl)lysine; alternate). K123 carries the N6-methyllysine; alternate modification. K123 is subject to N6-succinyllysine; alternate.

The protein belongs to the histone H3 family. In terms of assembly, the nucleosome is a histone octamer containing two molecules each of H2A, H2B, H3 and H4 assembled in one H3-H4 heterotetramer and two H2A-H2B heterodimers. The octamer wraps approximately 147 bp of DNA. During nucleosome assembly the chaperone ASF1A interacts with the histone H3-H4 heterodimer. Post-translationally, acetylation is generally linked to gene activation. Acetylation on Lys-10 (H3K9ac) impairs methylation at Arg-9 (H3R8me2s). Acetylation on Lys-19 (H3K18ac) and Lys-24 (H3K24ac) favors methylation at Arg-18 (H3R17me). Acetylation at Lys-123 (H3K122ac) by EP300/p300 plays a central role in chromatin structure: localizes at the surface of the histone octamer and stimulates transcription, possibly by promoting nucleosome instability. Citrullination at Arg-9 (H3R8ci) and/or Arg-18 (H3R17ci) by PADI4 impairs methylation and represses transcription. In terms of processing, asymmetric dimethylation at Arg-18 (H3R17me2a) by CARM1 is linked to gene activation. Symmetric dimethylation at Arg-9 (H3R8me2s) by PRMT5 is linked to gene repression. Asymmetric dimethylation at Arg-3 (H3R2me2a) by PRMT6 is linked to gene repression and is mutually exclusive with H3 Lys-5 methylation (H3K4me2 and H3K4me3). H3R2me2a is present at the 3' of genes regardless of their transcription state and is enriched on inactive promoters, while it is absent on active promoters. Post-translationally, methylation at Lys-5 (H3K4me), Lys-37 (H3K36me) and Lys-80 (H3K79me) are linked to gene activation. Methylation at Lys-5 (H3K4me) facilitates subsequent acetylation of H3 and H4. Methylation at Lys-80 (H3K79me) is associated with DNA double-strand break (DSB) responses and is a specific target for TP53BP1. Methylation at Lys-10 (H3K9me) and Lys-28 (H3K27me) are linked to gene repression. Methylation at Lys-10 (H3K9me) is a specific target for HP1 proteins (CBX1, CBX3 and CBX5) and prevents subsequent phosphorylation at Ser-11 (H3S10ph) and acetylation of H3 and H4. Methylation at Lys-5 (H3K4me) and Lys-80 (H3K79me) require preliminary monoubiquitination of H2B at 'Lys-120'. Methylation at Lys-10 (H3K9me) and Lys-28 (H3K27me) are enriched in inactive X chromosome chromatin. Monomethylation at Lys-57 (H3K56me1) by EHMT2/G9A in G1 phase promotes interaction with PCNA and is required for DNA replication. Phosphorylated at Thr-4 (H3T3ph) by HASPIN during prophase and dephosphorylated during anaphase. Phosphorylation at Ser-11 (H3S10ph) by AURKB is crucial for chromosome condensation and cell-cycle progression during mitosis and meiosis. In addition phosphorylation at Ser-11 (H3S10ph) by RPS6KA4 and RPS6KA5 is important during interphase because it enables the transcription of genes following external stimulation, like mitogens, stress, growth factors or UV irradiation and result in the activation of genes, such as c-fos and c-jun. Phosphorylation at Ser-11 (H3S10ph), which is linked to gene activation, prevents methylation at Lys-10 (H3K9me) but facilitates acetylation of H3 and H4. Phosphorylation at Ser-11 (H3S10ph) by AURKB mediates the dissociation of HP1 proteins (CBX1, CBX3 and CBX5) from heterochromatin. Phosphorylation at Ser-11 (H3S10ph) is also an essential regulatory mechanism for neoplastic cell transformation. Phosphorylated at Ser-29 (H3S28ph) by MAP3K20 isoform 1, RPS6KA5 or AURKB during mitosis or upon ultraviolet B irradiation. Phosphorylation at Thr-7 (H3T6ph) by PRKCB is a specific tag for epigenetic transcriptional activation that prevents demethylation of Lys-5 (H3K4me) by LSD1/KDM1A. At centromeres, specifically phosphorylated at Thr-12 (H3T11ph) from prophase to early anaphase, by DAPK3 and PKN1. Phosphorylation at Thr-12 (H3T11ph) by PKN1 or isoform M2 of PKM (PKM2) is a specific tag for epigenetic transcriptional activation that promotes demethylation of Lys-10 (H3K9me) by KDM4C/JMJD2C. Phosphorylation at Tyr-42 (H3Y41ph) by JAK2 promotes exclusion of CBX5 (HP1 alpha) from chromatin. In terms of processing, ubiquitinated. Post-translationally, lysine deamination at Lys-5 (H3K4all) to form allysine is mediated by LOXL2. Allysine formation by LOXL2 only takes place on H3K4me3 and results in gene repression. Butyrylation of histones marks active promoters and competes with histone acetylation. It is present during late spermatogenesis. In terms of processing, succinylation at Lys-80 (H3K79succ) by KAT2A takes place with a maximum frequency around the transcription start sites of genes. It gives a specific tag for epigenetic transcription activation. Desuccinylation at Lys-123 (H3K122succ) by SIRT7 in response to DNA damage promotes chromatin condensation and double-strand breaks (DSBs) repair. Post-translationally, serine ADP-ribosylation constitutes the primary form of ADP-ribosylation of proteins in response to DNA damage. Serine ADP-ribosylation at Ser-11 (H3S10ADPr) is mutually exclusive with phosphorylation at Ser-11 (H3S10ph) and impairs acetylation at Lys-10 (H3K9ac).

Its subcellular location is the nucleus. It localises to the chromosome. Its function is as follows. Core component of nucleosome. Nucleosomes wrap and compact DNA into chromatin, limiting DNA accessibility to the cellular machineries which require DNA as a template. Histones thereby play a central role in transcription regulation, DNA repair, DNA replication and chromosomal stability. DNA accessibility is regulated via a complex set of post-translational modifications of histones, also called histone code, and nucleosome remodeling. This is Histone H3-7 from Homo sapiens (Human).